We begin with the raw amino-acid sequence, 616 residues long: Chaperone protein HscA (616 aa).

Belongs to the heat shock protein 70 family.

Its function is as follows. Chaperone involved in the maturation of iron-sulfur cluster-containing proteins. Has a low intrinsic ATPase activity which is markedly stimulated by HscB. Involved in the maturation of IscU. This Pectobacterium atrosepticum (strain SCRI 1043 / ATCC BAA-672) (Erwinia carotovora subsp. atroseptica) protein is Chaperone protein HscA.